Here is a 123-residue protein sequence, read N- to C-terminus: Holo-[acyl-carrier-protein] synthase (123 aa).

2 residues coordinate Mg(2+): D8 and E56.

The protein belongs to the P-Pant transferase superfamily. AcpS family. Mg(2+) serves as cofactor.

Its subcellular location is the cytoplasm. It carries out the reaction apo-[ACP] + CoA = holo-[ACP] + adenosine 3',5'-bisphosphate + H(+). Functionally, transfers the 4'-phosphopantetheine moiety from coenzyme A to a Ser of acyl-carrier-protein. The chain is Holo-[acyl-carrier-protein] synthase from Clostridium beijerinckii (strain ATCC 51743 / NCIMB 8052) (Clostridium acetobutylicum).